A 721-amino-acid polypeptide reads, in one-letter code: uncharacterized protein (721 aa).

A helical membrane pass occupies residues 6–26 (QLIFVNFYVILIIWWFVMGIL). 308-315 (GGTGSGKT) serves as a coordination point for ATP.

This sequence belongs to the GSP E family. This protein undergoes a protein self splicing that involves a post-translational excision of the intervening region (intein) followed by peptide ligation.

It is found in the membrane. This is an uncharacterized protein from Methanocaldococcus jannaschii (strain ATCC 43067 / DSM 2661 / JAL-1 / JCM 10045 / NBRC 100440) (Methanococcus jannaschii).